A 401-amino-acid chain; its full sequence is Probable tRNA sulfurtransferase (401 aa).

One can recognise a THUMP domain in the interval 63 to 168 (TTAEQALSCL…EREAFLYGAR (106 aa)). Residues 186–187 (LL), 211–212 (YF), arginine 268, glycine 290, and glutamine 299 each bind ATP.

This sequence belongs to the ThiI family.

Its subcellular location is the cytoplasm. It catalyses the reaction [ThiI sulfur-carrier protein]-S-sulfanyl-L-cysteine + a uridine in tRNA + 2 reduced [2Fe-2S]-[ferredoxin] + ATP + H(+) = [ThiI sulfur-carrier protein]-L-cysteine + a 4-thiouridine in tRNA + 2 oxidized [2Fe-2S]-[ferredoxin] + AMP + diphosphate. It carries out the reaction [ThiS sulfur-carrier protein]-C-terminal Gly-Gly-AMP + S-sulfanyl-L-cysteinyl-[cysteine desulfurase] + AH2 = [ThiS sulfur-carrier protein]-C-terminal-Gly-aminoethanethioate + L-cysteinyl-[cysteine desulfurase] + A + AMP + 2 H(+). Its pathway is cofactor biosynthesis; thiamine diphosphate biosynthesis. Catalyzes the ATP-dependent transfer of a sulfur to tRNA to produce 4-thiouridine in position 8 of tRNAs, which functions as a near-UV photosensor. Also catalyzes the transfer of sulfur to the sulfur carrier protein ThiS, forming ThiS-thiocarboxylate. This is a step in the synthesis of thiazole, in the thiamine biosynthesis pathway. The sulfur is donated as persulfide by IscS. This is Probable tRNA sulfurtransferase from Treponema pallidum subsp. pallidum (strain SS14).